The sequence spans 305 residues: Tyrosine recombinase XerC (305 aa).

Positions 4–95 constitute a Core-binding (CB) domain; sequence TSIQALINKW…AVKNFYRFLE (92 aa). In terms of domain architecture, Tyr recombinase spans 116-298; that stretch reads LLPKALSEDD…SIKHLEAVYT (183 aa). Active-site residues include Arg-159, Lys-182, His-250, Arg-253, and His-276. Tyr-285 acts as the O-(3'-phospho-DNA)-tyrosine intermediate in catalysis.

It belongs to the 'phage' integrase family. XerC subfamily. In terms of assembly, forms a cyclic heterotetrameric complex composed of two molecules of XerC and two molecules of XerD.

Its subcellular location is the cytoplasm. Site-specific tyrosine recombinase, which acts by catalyzing the cutting and rejoining of the recombining DNA molecules. The XerC-XerD complex is essential to convert dimers of the bacterial chromosome into monomers to permit their segregation at cell division. It also contributes to the segregational stability of plasmids. The protein is Tyrosine recombinase XerC of Rickettsia conorii (strain ATCC VR-613 / Malish 7).